Here is a 307-residue protein sequence, read N- to C-terminus: Aspartate carbamoyltransferase catalytic subunit (307 aa).

Positions 54 and 55 each coordinate carbamoyl phosphate. Lys-83 provides a ligand contact to L-aspartate. The carbamoyl phosphate site is built by Arg-104, His-132, and Gln-135. Residues Arg-165 and Arg-228 each contribute to the L-aspartate site. The carbamoyl phosphate site is built by Leu-267 and Pro-268.

Belongs to the aspartate/ornithine carbamoyltransferase superfamily. ATCase family. Heterododecamer (2C3:3R2) of six catalytic PyrB chains organized as two trimers (C3), and six regulatory PyrI chains organized as three dimers (R2).

It carries out the reaction carbamoyl phosphate + L-aspartate = N-carbamoyl-L-aspartate + phosphate + H(+). Its pathway is pyrimidine metabolism; UMP biosynthesis via de novo pathway; (S)-dihydroorotate from bicarbonate: step 2/3. Catalyzes the condensation of carbamoyl phosphate and aspartate to form carbamoyl aspartate and inorganic phosphate, the committed step in the de novo pyrimidine nucleotide biosynthesis pathway. The polypeptide is Aspartate carbamoyltransferase catalytic subunit (Clostridium perfringens (strain 13 / Type A)).